Consider the following 68-residue polypeptide: Large ribosomal subunit protein bL33c (68 aa).

Belongs to the bacterial ribosomal protein bL33 family.

It localises to the plastid. The protein localises to the chloroplast. This chain is Large ribosomal subunit protein bL33c, found in Piper cenocladum (Ant piper).